We begin with the raw amino-acid sequence, 843 residues long: RNA-binding protein 25 (843 aa).

The interval 1–30 (MSFPPHLNRPPMGIPALPPGIPPPQFPGFP) is disordered. The span at 12-30 (MGIPALPPGIPPPQFPGFP) shows a compositional bias: pro residues. An RRM domain is found at 87-164 (TTVFVGNISE…KKLLVKVDAK (78 aa)). At lysine 135 the chain carries N6-acetyllysine. Disordered regions lie at residues 171–202 (EWKA…ETKR) and 219–243 (SSEL…KKED). Phosphoserine occurs at positions 226 and 229. Glycyl lysine isopeptide (Lys-Gly) (interchain with G-Cter in SUMO2) cross-links involve residues lysine 261, lysine 273, and lysine 430. Composition is skewed to basic and acidic residues over residues 280 to 433 (EISK…KRDR) and 521 to 573 (RLRD…ERRR). Disordered stretches follow at residues 280–442 (EISK…DAYE) and 498–688 (EFLE…KRKK). Positions 285 to 644 (RDTHKKLEEE…PNTPGDESPC (360 aa)) are necessary for nuclear speckle localization. Lysine 578 is covalently cross-linked (Glycyl lysine isopeptide (Lys-Gly) (interchain with G-Cter in SUMO2)). Phosphoserine is present on serine 583. The span at 590 to 599 (KQEKEEKREE) shows a compositional bias: basic and acidic residues. Positions 621–630 (SSAPSVSSAS) are enriched in low complexity. Residue lysine 671 forms a Glycyl lysine isopeptide (Lys-Gly) (interchain with G-Cter in SUMO2) linkage. Positions 674–683 (ASNSPGQPNS) are enriched in polar residues. Serine 677 and serine 683 each carry phosphoserine. Glycyl lysine isopeptide (Lys-Gly) (interchain with G-Cter in SUMO2) cross-links involve residues lysine 688 and lysine 697. At serine 703 the chain carries Phosphoserine. Residue lysine 722 forms a Glycyl lysine isopeptide (Lys-Gly) (interchain with G-Cter in SUMO2) linkage. The region spanning 750–843 (PELFAYPLDW…TEAKKIGLVK (94 aa)) is the PWI domain.

Interacts with LUC7L3 and SRRM1. Specifically associates with functional splicing complexes, including Sm proteins and U1, U2, U4, U5 and U6 snRNAs. Associates with exon junction complex (EJC) proteins, including APEX1, DDX39B, NCBP1, RBM8A and RNPS1. Interaction with NCBP1 is RNA-dependent. In terms of processing, sumoylated.

The protein resides in the nucleus speckle. It localises to the cytoplasm. RNA-binding protein that acts as a regulator of alternative pre-mRNA splicing. Involved in apoptotic cell death through the regulation of the apoptotic factor BCL2L1 isoform expression. Modulates the ratio of proapoptotic BCL2L1 isoform S to antiapoptotic BCL2L1 isoform L mRNA expression. When overexpressed, stimulates proapoptotic BCL2L1 isoform S 5'-splice site (5'-ss) selection, whereas its depletion caused the accumulation of antiapoptotic BCL2L1 isoform L. Promotes BCL2L1 isoform S 5'-ss usage through the 5'-CGGGCA-3' RNA sequence. Its association with LUC7L3 promotes U1 snRNP binding to a weak 5' ss in a 5'-CGGGCA-3'-dependent manner. Binds to the exonic splicing enhancer 5'-CGGGCA-3' RNA sequence located within exon 2 of the BCL2L1 pre-mRNA. Also involved in the generation of an abnormal and truncated splice form of SCN5A in heart failure. The chain is RNA-binding protein 25 (RBM25) from Homo sapiens (Human).